The primary structure comprises 142 residues: Large ribosomal subunit protein uL11 (142 aa).

It belongs to the universal ribosomal protein uL11 family. Part of the ribosomal stalk of the 50S ribosomal subunit. Interacts with L10 and the large rRNA to form the base of the stalk. L10 forms an elongated spine to which L12 dimers bind in a sequential fashion forming a multimeric L10(L12)X complex. In terms of processing, one or more lysine residues are methylated.

Its function is as follows. Forms part of the ribosomal stalk which helps the ribosome interact with GTP-bound translation factors. The protein is Large ribosomal subunit protein uL11 of Methylocella silvestris (strain DSM 15510 / CIP 108128 / LMG 27833 / NCIMB 13906 / BL2).